The chain runs to 86 residues: Translation initiation factor IF-1 2 (86 aa).

One can recognise an S1-like domain in the interval 1-72 (MAKEELLEME…SKGRITFRHI (72 aa)).

The protein belongs to the IF-1 family. As to quaternary structure, component of the 30S ribosomal translation pre-initiation complex which assembles on the 30S ribosome in the order IF-2 and IF-3, IF-1 and N-formylmethionyl-tRNA(fMet); mRNA recruitment can occur at any time during PIC assembly.

It localises to the cytoplasm. Its function is as follows. One of the essential components for the initiation of protein synthesis. Stabilizes the binding of IF-2 and IF-3 on the 30S subunit to which N-formylmethionyl-tRNA(fMet) subsequently binds. Helps modulate mRNA selection, yielding the 30S pre-initiation complex (PIC). Upon addition of the 50S ribosomal subunit IF-1, IF-2 and IF-3 are released leaving the mature 70S translation initiation complex. The sequence is that of Translation initiation factor IF-1 2 from Polynucleobacter asymbioticus (strain DSM 18221 / CIP 109841 / QLW-P1DMWA-1) (Polynucleobacter necessarius subsp. asymbioticus).